Reading from the N-terminus, the 311-residue chain is Vomeronasal type-1 receptor 105 (311 aa).

The Extracellular segment spans residues 1–17 (MMNKNSRLYTDSNIRNT). A helical membrane pass occupies residues 18-38 (FFAEIGIGVSANSLLLLFNIF). At 39–50 (KLICGQRSRLTD) the chain is on the cytoplasmic side. A helical membrane pass occupies residues 51–71 (LPIGLLSLINLLMLLMTAFIA). Over 72-94 (TDTFISWRGWDDIICKSLLYLYR) the chain is Extracellular. A disulfide bond links Cys86 and Cys173. A helical membrane pass occupies residues 95–115 (TFRGLSLCTSCLLSVLQAIIL). Over 116–135 (SPRSSCLAKFKHKPSHHISC) the chain is Cytoplasmic. Residues 136–156 (AILSLSVLYMFISSHLLVSII) form a helical membrane-spanning segment. Topologically, residues 157–188 (ATPNLTTNDFIHVTQWCSILPMSYLMQSMFST) are extracellular. The N-linked (GlcNAc...) asparagine glycan is linked to Asn160. Residues 189–209 (LLAIRDVFLISLMVLSTWYMV) traverse the membrane as a helical segment. Residues 210-239 (ALLCRHRKQTRHLQGTSLSPKASPEQRATR) lie on the Cytoplasmic side of the membrane. Residues 240–260 (SILMLMSLFVLMSVFDSIVCS) traverse the membrane as a helical segment. Over 261 to 271 (SRTMYLNDPIS) the chain is Extracellular. The chain crosses the membrane as a helical span at residues 272–292 (YSYQLFMVHIYATVSPFVFIV). Topologically, residues 293-311 (TEKHIVNSLRSMCVKVMNV) are cytoplasmic.

This sequence belongs to the G-protein coupled receptor 1 family. In terms of tissue distribution, expressed in 1-4% of neurons of the vomeronasal organ. Only one pheromone receptor gene may be expressed in a particular neuron. Not expressed in the main olfactory epithelium.

Its subcellular location is the cell membrane. Its function is as follows. Putative pheromone receptor implicated in the regulation of social as well as reproductive behavior. The protein is Vomeronasal type-1 receptor 105 (Vom1r105) of Rattus norvegicus (Rat).